Consider the following 96-residue polypeptide: Co-chaperonin GroES (96 aa).

The protein belongs to the GroES chaperonin family. In terms of assembly, heptamer of 7 subunits arranged in a ring. Interacts with the chaperonin GroEL.

It localises to the cytoplasm. Functionally, together with the chaperonin GroEL, plays an essential role in assisting protein folding. The GroEL-GroES system forms a nano-cage that allows encapsulation of the non-native substrate proteins and provides a physical environment optimized to promote and accelerate protein folding. GroES binds to the apical surface of the GroEL ring, thereby capping the opening of the GroEL channel. The chain is Co-chaperonin GroES from Paraburkholderia phytofirmans (strain DSM 17436 / LMG 22146 / PsJN) (Burkholderia phytofirmans).